The chain runs to 338 residues: Large ribosomal subunit protein uL3 (338 aa).

Disordered stretches follow at residues 230 to 256 and 315 to 338; these read HRKG…RPGQ and PARP…SQQP.

This sequence belongs to the universal ribosomal protein uL3 family. In terms of assembly, part of the 50S ribosomal subunit. Forms a cluster with proteins L14 and L24e.

In terms of biological role, one of the primary rRNA binding proteins, it binds directly near the 3'-end of the 23S rRNA, where it nucleates assembly of the 50S subunit. The sequence is that of Large ribosomal subunit protein uL3 from Pyrobaculum arsenaticum (strain DSM 13514 / JCM 11321 / PZ6).